The following is a 446-amino-acid chain: Sensor-type histidine kinase PrrB (446 aa).

2 consecutive transmembrane segments (helical) span residues 19–39 (VVAT…VVWV) and 151–171 (LLIC…LAAF). An HAMP domain is found at 172–222 (AVRPFKQLAQQTRSVDAGGEAPRVEVHGATEAVEIAEAMRGMLQRIWNEQN). The region spanning 237-446 (VSSHELRTPL…RLLLRISAPS (210 aa)) is the Histidine kinase domain. At H240 the chain carries Phosphohistidine; by autocatalysis.

Post-translationally, autophosphorylated.

Its subcellular location is the cell membrane. It carries out the reaction ATP + protein L-histidine = ADP + protein N-phospho-L-histidine.. Its function is as follows. Member of the two-component regulatory system PrrB/PrrA that is involved specifically in early intracellular multiplication of Mycobacterium and is essential for its viability. Functions as a sensor protein kinase which is autophosphorylated at a histidine residue and transfers its phosphate group to the conserved aspartic acid residue in the regulatory domain of PrrA. In turn, PrrA binds to the upstream promoter regions of target genes including itself to positively regulate their expression. This Mycobacterium leprae (strain TN) protein is Sensor-type histidine kinase PrrB (prrB).